A 368-amino-acid polypeptide reads, in one-letter code: Branched-chain-amino-acid aminotransferase (368 aa).

Arg101 lines the pyridoxal 5'-phosphate pocket. N6-(pyridoxal phosphate)lysine is present on Lys204. Pyridoxal 5'-phosphate is bound by residues Tyr209 and 271–272; that span reads IT. Residue Lys299 forms an Isoglutamyl lysine isopeptide (Lys-Gln) (interchain with Q-Cter in protein Pup) linkage. Thr314 serves as a coordination point for pyridoxal 5'-phosphate.

Belongs to the class-IV pyridoxal-phosphate-dependent aminotransferase family. As to quaternary structure, homodimer. The cofactor is pyridoxal 5'-phosphate.

The enzyme catalyses L-isoleucine + 2-oxoglutarate = (S)-3-methyl-2-oxopentanoate + L-glutamate. It catalyses the reaction L-valine + 2-oxoglutarate = 3-methyl-2-oxobutanoate + L-glutamate. It carries out the reaction L-leucine + 2-oxoglutarate = 4-methyl-2-oxopentanoate + L-glutamate. The protein operates within amino-acid biosynthesis; L-isoleucine biosynthesis; L-isoleucine from 2-oxobutanoate: step 4/4. Its pathway is amino-acid biosynthesis; L-leucine biosynthesis; L-leucine from 3-methyl-2-oxobutanoate: step 4/4. It functions in the pathway amino-acid biosynthesis; L-valine biosynthesis; L-valine from pyruvate: step 4/4. Its activity is regulated as follows. Inhibited by ammonium sulfate at millimolar concentrations and by O-benzylhydroxylamine (Obe). Its function is as follows. Catalyzes the reversible transfers of an amino group from glutamate to the alpha-ketoacid of the respective amino acid in the final step in the biosynthesis of branchedchain amino acids. The amino acids can be ranked in the following order with respect to their efficiency as amino donor: Leu &gt; Ile &gt; Val. This Mycolicibacterium smegmatis (strain ATCC 700084 / mc(2)155) (Mycobacterium smegmatis) protein is Branched-chain-amino-acid aminotransferase (ilvE).